The chain runs to 1234 residues: ATP-dependent helicase/nuclease subunit A (1234 aa).

A UvrD-like helicase ATP-binding domain is found at 2–475 (TQFTTSQQAA…IILAENFRST (474 aa)). Residue 23–30 (ASAGSGKT) coordinates ATP. In terms of domain architecture, UvrD-like helicase C-terminal spans 507–806 (YGALDYGDAH…KLMTIHKSKG (300 aa)).

This sequence belongs to the helicase family. AddA subfamily. As to quaternary structure, heterodimer of AddA and AddB/RexB. It depends on Mg(2+) as a cofactor.

It catalyses the reaction Couples ATP hydrolysis with the unwinding of duplex DNA by translocating in the 3'-5' direction.. The enzyme catalyses ATP + H2O = ADP + phosphate + H(+). In terms of biological role, the heterodimer acts as both an ATP-dependent DNA helicase and an ATP-dependent, dual-direction single-stranded exonuclease. Recognizes the chi site generating a DNA molecule suitable for the initiation of homologous recombination. The AddA nuclease domain is required for chi fragment generation; this subunit has the helicase and 3' -&gt; 5' nuclease activities. This Lacticaseibacillus casei (strain BL23) (Lactobacillus casei) protein is ATP-dependent helicase/nuclease subunit A.